The primary structure comprises 547 residues: CTP synthase (547 aa).

The interval 1–265 (MARYVFITGG…DQAVLDAFGI (265 aa)) is amidoligase domain. Serine 13 lines the CTP pocket. Residue serine 13 participates in UTP binding. Residues 14–19 (SLGKGL) and aspartate 71 contribute to the ATP site. Residues aspartate 71 and glutamate 139 each contribute to the Mg(2+) site. Residues 146–148 (DIE), 186–191 (KTKPTQ), and lysine 222 contribute to the CTP site. UTP-binding positions include 186-191 (KTKPTQ) and lysine 222. One can recognise a Glutamine amidotransferase type-1 domain in the interval 291-546 (RVAIVGKYTQ…VRAAVEVSRL (256 aa)). Residue glycine 353 participates in L-glutamine binding. Residue cysteine 380 is the Nucleophile; for glutamine hydrolysis of the active site. L-glutamine-binding positions include 381-384 (LGMQ), glutamate 404, and arginine 474. Catalysis depends on residues histidine 519 and glutamate 521.

The protein belongs to the CTP synthase family. As to quaternary structure, homotetramer.

The catalysed reaction is UTP + L-glutamine + ATP + H2O = CTP + L-glutamate + ADP + phosphate + 2 H(+). It carries out the reaction L-glutamine + H2O = L-glutamate + NH4(+). It catalyses the reaction UTP + NH4(+) + ATP = CTP + ADP + phosphate + 2 H(+). It functions in the pathway pyrimidine metabolism; CTP biosynthesis via de novo pathway; CTP from UDP: step 2/2. With respect to regulation, allosterically activated by GTP, when glutamine is the substrate; GTP has no effect on the reaction when ammonia is the substrate. The allosteric effector GTP functions by stabilizing the protein conformation that binds the tetrahedral intermediate(s) formed during glutamine hydrolysis. Inhibited by the product CTP, via allosteric rather than competitive inhibition. Functionally, catalyzes the ATP-dependent amination of UTP to CTP with either L-glutamine or ammonia as the source of nitrogen. Regulates intracellular CTP levels through interactions with the four ribonucleotide triphosphates. This is CTP synthase from Cereibacter sphaeroides (strain ATCC 17029 / ATH 2.4.9) (Rhodobacter sphaeroides).